Here is a 507-residue protein sequence, read N- to C-terminus: Anaerobic nitric oxide reductase transcription regulator NorR (507 aa).

Asp57 is modified (4-aspartylphosphate). Residues 188 to 417 form the Sigma-54 factor interaction domain; it reads IIGLSSVMQQ…LEHSIYRAAI (230 aa). Residues 216–223 and 279–288 contribute to the ATP site; these read GETGVGKE and ADNGTLFLDE. A DNA-binding region (H-T-H motif) is located at residues 483–502; that stretch reads WAATARKLELDSGNLHRLAK.

The protein operates within nitrogen metabolism; nitric oxide reduction. Functionally, required for the expression of anaerobic nitric oxide (NO) reductase, acts as a transcriptional activator for at least the norVW operon. Activation also requires sigma-54. In Serratia proteamaculans (strain 568), this protein is Anaerobic nitric oxide reductase transcription regulator NorR.